Reading from the N-terminus, the 144-residue chain is Urease subunit beta (144 aa).

It belongs to the urease beta subunit family. As to quaternary structure, heterotrimer of UreA (gamma), UreB (beta) and UreC (alpha) subunits. Three heterotrimers associate to form the active enzyme.

It is found in the cytoplasm. It carries out the reaction urea + 2 H2O + H(+) = hydrogencarbonate + 2 NH4(+). Its pathway is nitrogen metabolism; urea degradation; CO(2) and NH(3) from urea (urease route): step 1/1. The protein is Urease subunit beta of Yersinia pseudotuberculosis serotype O:1b (strain IP 31758).